The following is a 646-amino-acid chain: Zinc finger protein 503 (646 aa).

Residues M1 to R11 show a composition bias toward polar residues. A disordered region spans residues M1–N70. Positions S16–A28 are enriched in gly residues. Positions S34–S52 are enriched in low complexity. Phosphoserine is present on S102. The tract at residues S121–L332 is disordered. The span at P130–S139 shows a compositional bias: low complexity. Gly residues-rich tracts occupy residues N140–A152 and G189–V205. K209 is modified (N6-acetyllysine). The span at A217 to T226 shows a compositional bias: polar residues. The segment covering G227–G240 has biased composition (low complexity). S231 and S237 each carry phosphoserine. The span at E250–D259 shows a compositional bias: basic and acidic residues. Gly residues-rich tracts occupy residues V260–T277 and G300–S315. Residues G316 to S330 show a composition bias toward low complexity. A C2H2-type zinc finger spans residues H514–H542. R636 bears the Omega-N-methylarginine mark.

Belongs to the Elbow/Noc family.

Its subcellular location is the nucleus. Functionally, may function as a transcriptional repressor. The sequence is that of Zinc finger protein 503 (ZNF503) from Homo sapiens (Human).